A 271-amino-acid chain; its full sequence is Rhomboid-type serine protease 2 (271 aa).

Helical transmembrane passes span 16–36 (GLAV…NLVY), 64–84 (HLSF…IVMF), 89–111 (GTLY…YCLI), 115–137 (LFPN…YFAV), 152–172 (FSFP…LLAP), and 176–196 (LPGH…ENWV). Catalysis depends on Ser-125, which acts as the Nucleophile. His-179 is a catalytic residue. The tract at residues 252-271 (HNTDTPAEPTFQGNGRVLGN) is disordered.

Belongs to the peptidase S54 family.

Its subcellular location is the golgi apparatus membrane. The protein localises to the golgi apparatus. It is found in the cis-Golgi network membrane. It catalyses the reaction Cleaves type-1 transmembrane domains using a catalytic dyad composed of serine and histidine that are contributed by different transmembrane domains.. Its function is as follows. Probable rhomboid-type serine protease that catalyzes intramembrane proteolysis. In Kluyveromyces lactis (strain ATCC 8585 / CBS 2359 / DSM 70799 / NBRC 1267 / NRRL Y-1140 / WM37) (Yeast), this protein is Rhomboid-type serine protease 2 (RBD2).